A 375-amino-acid polypeptide reads, in one-letter code: Actin-related protein T1 (375 aa).

This sequence belongs to the actin family.

It is found in the cytoplasm. Its subcellular location is the cytoskeleton. The protein resides in the nucleus. It localises to the cytoplasmic vesicle. The protein localises to the secretory vesicle. It is found in the acrosome. Functionally, negatively regulates the Hedgehog (SHH) signaling. Binds to the promoter of the SHH signaling mediator, GLI1, and inhibits its expression. This Macaca fascicularis (Crab-eating macaque) protein is Actin-related protein T1 (ACTRT1).